The sequence spans 238 residues: dITP/XTP pyrophosphatase (238 aa).

Position 7-12 (7-12 (SANQHK)) interacts with substrate. The active-site Proton acceptor is the aspartate 89. Aspartate 89 contributes to the Mg(2+) binding site. Residues serine 90, 191–194 (FGYD), lysine 217, and 222–223 (HR) contribute to the substrate site.

It belongs to the HAM1 NTPase family. As to quaternary structure, homodimer. The cofactor is Mg(2+).

It catalyses the reaction XTP + H2O = XMP + diphosphate + H(+). It carries out the reaction dITP + H2O = dIMP + diphosphate + H(+). The enzyme catalyses ITP + H2O = IMP + diphosphate + H(+). Functionally, pyrophosphatase that catalyzes the hydrolysis of nucleoside triphosphates to their monophosphate derivatives, with a high preference for the non-canonical purine nucleotides XTP (xanthosine triphosphate), dITP (deoxyinosine triphosphate) and ITP. Seems to function as a house-cleaning enzyme that removes non-canonical purine nucleotides from the nucleotide pool, thus preventing their incorporation into DNA/RNA and avoiding chromosomal lesions. The sequence is that of dITP/XTP pyrophosphatase from Helicobacter hepaticus (strain ATCC 51449 / 3B1).